Here is a 186-residue protein sequence, read N- to C-terminus: MKAGALELGEGSKTSIPRGGVNRGISILDFILRLITIIGTLGSAIAMGTTNETLPFFTQFTQFRAEYDDLPTFTFFVIANSIVSGYLVLSLPMSILHIVRSGARASRIVLIFFDTAMLALLTAAASAASAIVYLAHKGNAQANWFAICQQFKSFCERISGSLIGSFGGIILFILLVLLSAVALSRC.

The Cytoplasmic portion of the chain corresponds to 1-26 (MKAGALELGEGSKTSIPRGGVNRGIS). A helical transmembrane segment spans residues 27-47 (ILDFILRLITIIGTLGSAIAM). Residues 48–74 (GTTNETLPFFTQFTQFRAEYDDLPTFT) are Extracellular-facing. N-linked (GlcNAc...) asparagine glycosylation occurs at Asn-51. Residues 75–95 (FFVIANSIVSGYLVLSLPMSI) form a helical membrane-spanning segment. Residues 96–107 (LHIVRSGARASR) lie on the Cytoplasmic side of the membrane. The helical transmembrane segment at 108–128 (IVLIFFDTAMLALLTAAASAA) threads the bilayer. Topologically, residues 129–161 (SAIVYLAHKGNAQANWFAICQQFKSFCERISGS) are extracellular. A helical membrane pass occupies residues 162–182 (LIGSFGGIILFILLVLLSAVA). The Cytoplasmic portion of the chain corresponds to 183–186 (LSRC).

This sequence belongs to the Casparian strip membrane proteins (CASP) family. Homodimer and heterodimers.

The protein localises to the cell membrane. In terms of biological role, regulates membrane-cell wall junctions and localized cell wall deposition. Required for establishment of the Casparian strip membrane domain (CSD) and the subsequent formation of Casparian strips, a cell wall modification of the root endodermis that determines an apoplastic barrier between the intraorganismal apoplasm and the extraorganismal apoplasm and prevents lateral diffusion. This Vitis vinifera (Grape) protein is Casparian strip membrane protein 3.